The primary structure comprises 562 residues: Tetratricopeptide repeat protein 34 (562 aa).

Positions 1–30 (MLHKKPQRANENGISQRKKPSDQDNSSVKE) are disordered. Residues 19–30 (KPSDQDNSSVKE) are compositionally biased toward basic and acidic residues. 8 TPR repeats span residues 51–84 (DVSR…SSQR), 175–208 (KDSL…EPYN), 210–242 (EALS…DASY), 304–337 (AHFH…NAID), 388–421 (FQAA…SNNN), 423–455 (KYLR…HSSH), 461–494 (AEDY…EHAS), and 509–542 (AGIF…DENN).

This chain is Tetratricopeptide repeat protein 34 (ttc34), found in Xenopus laevis (African clawed frog).